The following is an 875-amino-acid chain: Phosphatidylinositol 3-kinase VPS34 (875 aa).

Positions 14–188 (LDVPLKVKIK…WLDEITISKL (175 aa)) constitute a C2 PI3K-type domain. Residues 293–526 (LDKQVKPDIK…SSFWSRLDKK (234 aa)) form the PIK helical domain. The PI3K/PI4K catalytic domain occupies 593–859 (CPETSKVFKS…LINDSVNALL (267 aa)). A G-loop region spans residues 599–605 (VFKSSLS). The tract at residues 728–736 (GVGDRHLDN) is catalytic loop. Residues 747 to 768 (HADFGYILGQDPKPFPPLMKLP) are activation loop.

The protein belongs to the PI3/PI4-kinase family. As to quaternary structure, component of the autophagy-specific VPS34 PI3-kinase complex I composed of VPS15, VPS30, VPS34, ATG14 and ATG38, and of the VPS34 PI3-kinase complex II composed of VPS15, VPS30, VPS34 and VPS38. Interacts directly with ATG38. Interacts directly with VPS34. Autophosphorylated. Might also be phosphorylated by VPS15.

It localises to the golgi apparatus. The protein localises to the trans-Golgi network membrane. Its subcellular location is the endosome membrane. It carries out the reaction a 1,2-diacyl-sn-glycero-3-phospho-(1D-myo-inositol) + ATP = a 1,2-diacyl-sn-glycero-3-phospho-(1D-myo-inositol-3-phosphate) + ADP + H(+). Phosphatidylinositol 3-kinase activity is directly dependent on VPS15 protein kinase activity. In terms of biological role, phosphatidylinositol 3-kinase required for cytoplasm to vacuole transport (Cvt) and autophagy as a part of the autophagy-specific VPS34 PI3-kinase complex I. This complex is essential to recruit the ATG8-phosphatidylinositol conjugate and the ATG12-ATG5 conjugate to the pre-autophagosomal structure. Also involved in endosome-to-Golgi retrograde transport as part of the VPS34 PI3-kinase complex II. This second complex is required for the endosome-to-Golgi retrieval of PEP1 and KEX2, and the recruitment of VPS5 and VPS7, two components of the retromer complex, to endosomal membranes (probably through the synthesis of a specific pool of phosphatidylinositol 3-phosphate recruiting the retromer to the endosomes). Its activation by VPS15 may lead to the phosphorylation of phosphatidylinositol in the sorting compartment membrane. Finally, it might also be involved in ethanol tolerance and cell wall integrity. The chain is Phosphatidylinositol 3-kinase VPS34 (VPS34) from Saccharomyces cerevisiae (strain ATCC 204508 / S288c) (Baker's yeast).